The following is a 503-amino-acid chain: Maturase K (503 aa).

Belongs to the intron maturase 2 family. MatK subfamily.

The protein resides in the plastid. The protein localises to the chloroplast. Its function is as follows. Usually encoded in the trnK tRNA gene intron. Probably assists in splicing its own and other chloroplast group II introns. This is Maturase K from Actinodium cunninghamii (Albany daisy).